The following is a 614-amino-acid chain: RNA polymerase sigma factor RpoD (614 aa).

Positions T178–F222 are disordered. Over residues Q186 to S198 the composition is skewed to basic and acidic residues. Residues K199–E208 show a composition bias toward acidic residues. The span at G209–F222 shows a compositional bias: basic and acidic residues. The segment at M380–T450 is sigma-70 factor domain-2. The Interaction with polymerase core subunit RpoC signature appears at D404 to Q407. The sigma-70 factor domain-3 stretch occupies residues E459–S535. The segment at V548–H601 is sigma-70 factor domain-4. Positions L574–A593 form a DNA-binding region, H-T-H motif.

This sequence belongs to the sigma-70 factor family. RpoD/SigA subfamily. As to quaternary structure, interacts transiently with the RNA polymerase catalytic core.

The protein localises to the cytoplasm. Functionally, sigma factors are initiation factors that promote the attachment of RNA polymerase to specific initiation sites and are then released. This sigma factor is the primary sigma factor during exponential growth. The polypeptide is RNA polymerase sigma factor RpoD (Shewanella violacea (strain JCM 10179 / CIP 106290 / LMG 19151 / DSS12)).